The chain runs to 249 residues: Basigin (249 aa).

In terms of domain architecture, Ig-like C2-type spans 1–82 (AAGTIQTSVN…VGRSNIVVEG (82 aa)). The Extracellular portion of the chain corresponds to 1–187 (AAGTIQTSVN…MTLRVRSRLA (187 aa)). Intrachain disulfides connect cysteine 20–cysteine 66 and cysteine 105–cysteine 165. N-linked (GlcNAc...) asparagine glycans are attached at residues asparagine 23, asparagine 132, and asparagine 166. The region spanning 84-179 (PRIKVGKKSE…TQGSVQEIMT (96 aa)) is the Ig-like V-type domain. A helical transmembrane segment spans residues 188 to 208 (ALWPFLGIVAEVLVLVTIIFI). The Cytoplasmic segment spans residues 209–249 (YEKRRKPDQTLDEDDPGAAPLKGSGHHMNDKDKNVRQRNAT). The segment at 216-249 (DQTLDEDDPGAAPLKGSGHHMNDKDKNVRQRNAT) is disordered. Residue threonine 218 is modified to Phosphothreonine. Serine 232 carries the phosphoserine modification.

Homooligomer. Interacts with VEGFA, KDR/VEGFR2, PPIA/CYPA, SLC16A12, SLC16A11, ATP1B2, MAG, L1CAM and AJAP1. Interacts with SLC16A3; interaction mediates SLC16A3 targeting to the plasma membrane. Interacts with SLC16A1; interaction mediates SLC16A1 targeting to the plasma membrane. Interacts with PPIL2; regulates BSG transport to the cell membrane. Interacts with XKR8; promoting its localization at the cell membrane. Interacts with SLC16A6; this interaction mediates targeting to the plasma membrane.

It localises to the cell membrane. It is found in the endoplasmic reticulum membrane. Its subcellular location is the basolateral cell membrane. Its function is as follows. Signaling receptor for cyclophilins, essential for PPIA/CYPA and PPIB/CYPB-dependent signaling related to chemotaxis and adhesion of immune cells. Plays an important role in targeting the monocarboxylate transporters SLC16A1/GLUT1, SLC16A3, SLC16A8, SLC16A11 and SLC16A12 to the plasma membrane. Acts as a coreceptor for vascular endothelial growth factor receptor 2 (KDR/VEGFR2) in endothelial cells enhancing its VEGFA-mediated activation and downstream signaling. Promotes angiogenesis through EPAS1/HIF2A-mediated up-regulation of VEGFA and KDR/VEGFR2 in endothelial cells. The chain is Basigin (BSG) from Cricetulus griseus (Chinese hamster).